The sequence spans 126 residues: 3-aminobutyryl-CoA ammonia lyase (126 aa).

It belongs to the KAL family. In terms of assembly, homohexamer.

It carries out the reaction (3S)-3-aminobutanoyl-CoA = (2E)-butenoyl-CoA + NH4(+). The protein operates within amino-acid degradation; L-lysine degradation via acetate pathway. Its function is as follows. Involved in the anaerobic fermentation of lysine. Catalyzes the deamination of L-3-aminobutyryl-CoA to produce crotonoyl-CoA. The protein is 3-aminobutyryl-CoA ammonia lyase of Acetoanaerobium sticklandii (strain ATCC 12662 / DSM 519 / JCM 1433 / CCUG 9281 / NCIMB 10654 / HF) (Clostridium sticklandii).